A 465-amino-acid polypeptide reads, in one-letter code: Argininosuccinate lyase (465 aa).

The protein belongs to the lyase 1 family. Argininosuccinate lyase subfamily.

The protein localises to the cytoplasm. It catalyses the reaction 2-(N(omega)-L-arginino)succinate = fumarate + L-arginine. The protein operates within amino-acid biosynthesis; L-arginine biosynthesis; L-arginine from L-ornithine and carbamoyl phosphate: step 3/3. In Deinococcus deserti (strain DSM 17065 / CIP 109153 / LMG 22923 / VCD115), this protein is Argininosuccinate lyase.